Reading from the N-terminus, the 77-residue chain is U8-lycotoxin-Ls1i (77 aa).

An N-terminal signal peptide occupies residues 1 to 20; sequence MKLIIFTGLVLFAIVSLIEV. Residues 21-26 constitute a propeptide that is removed on maturation; sequence QADNER.

This sequence belongs to the neurotoxin 19 (CSTX) family. 08 (U8-Lctx) subfamily. Contains 4 disulfide bonds. In terms of tissue distribution, expressed by the venom gland.

The protein resides in the secreted. The chain is U8-lycotoxin-Ls1i from Lycosa singoriensis (Wolf spider).